The following is a 246-amino-acid chain: Sensory transduction protein LytT (246 aa).

A Response regulatory domain is found at 4 to 120 (HIMIAEDERL…RFKIAMNRIR (117 aa)). A 4-aspartylphosphate modification is found at aspartate 55. Residues 136 to 243 (LVVNLDEKMM…AKGLFDALQG (108 aa)) form the HTH LytTR-type domain.

Post-translationally, phosphorylated by LytS.

It localises to the cytoplasm. Functionally, member of the two-component regulatory system LytS/LytT that probably regulates genes involved in cell wall metabolism. In Oceanobacillus iheyensis (strain DSM 14371 / CIP 107618 / JCM 11309 / KCTC 3954 / HTE831), this protein is Sensory transduction protein LytT (lytT).